The sequence spans 367 residues: Beta sliding clamp (367 aa).

This sequence belongs to the beta sliding clamp family. As to quaternary structure, forms a ring-shaped head-to-tail homodimer around DNA which binds and tethers DNA polymerases and other proteins to the DNA. The DNA replisome complex has a single clamp-loading complex (3 tau and 1 each of delta, delta', psi and chi subunits) which binds 3 Pol III cores (1 core on the leading strand and 2 on the lagging strand) each with a beta sliding clamp dimer. Additional proteins in the replisome are other copies of gamma, psi and chi, Ssb, DNA helicase and RNA primase.

The protein resides in the cytoplasm. Confers DNA tethering and processivity to DNA polymerases and other proteins. Acts as a clamp, forming a ring around DNA (a reaction catalyzed by the clamp-loading complex) which diffuses in an ATP-independent manner freely and bidirectionally along dsDNA. Initially characterized for its ability to contact the catalytic subunit of DNA polymerase III (Pol III), a complex, multichain enzyme responsible for most of the replicative synthesis in bacteria; Pol III exhibits 3'-5' exonuclease proofreading activity. The beta chain is required for initiation of replication as well as for processivity of DNA replication. This Proteus mirabilis protein is Beta sliding clamp (dnaN).